Consider the following 391-residue polypeptide: uncharacterized protein (391 aa).

This is an uncharacterized protein from Rickettsia prowazekii (strain Madrid E).